The following is a 35-amino-acid chain: UPF0387 membrane protein YohO (35 aa).

The chain crosses the membrane as a helical span at residues Ile-6 to Ala-26.

Belongs to the UPF0387 family.

It is found in the cell inner membrane. The sequence is that of UPF0387 membrane protein YohO from Escherichia coli O8 (strain IAI1).